The primary structure comprises 1025 residues: Collagen alpha-1(VI) chain (1025 aa).

The first 19 residues, Met-1–Thr-19, serve as a signal peptide directing secretion. The segment at Gln-20 to Arg-255 is N-terminal globular domain. A VWFA 1 domain is found at Asp-36–Ile-234. A glycan (N-linked (GlcNAc...) asparagine) is linked at Asn-211. The disordered stretch occupies residues Gln-252–Pro-588. A triple-helical region region spans residues Gly-256–Asp-591. Residues Arg-261–Asp-263 carry the Cell attachment site motif. Composition is skewed to basic and acidic residues over residues Glu-267–Asp-284 and Lys-300–Lys-333. 2 short sequence motifs (cell attachment site) span residues Arg-441–Asp-443 and Arg-477–Asp-479. N-linked (GlcNAc...) asparagine glycosylation is found at Asn-515 and Asn-536. Residues Gly-549–Asn-559 show a composition bias toward acidic residues. Residues Pro-578 to Pro-588 show a composition bias toward pro residues. The tract at residues Glu-592 to Gly-1025 is C-terminal globular domain. VWFA domains follow at residues Asp-614–Ile-802 and Asp-826–Val-1018. Residues Asn-801 and Asn-893 are each glycosylated (N-linked (GlcNAc...) asparagine).

It belongs to the type VI collagen family. In terms of assembly, trimers composed of three different chains: alpha-1(VI), alpha-2(VI), and alpha-3(VI) or alpha-4(VI) or alpha-5(VI) or alpha-6(VI). Prolines at the third position of the tripeptide repeating unit (G-X-Y) are hydroxylated in some or all of the chains.

Its subcellular location is the secreted. The protein resides in the extracellular space. The protein localises to the extracellular matrix. Functionally, collagen VI acts as a cell-binding protein. The chain is Collagen alpha-1(VI) chain (Col6a1) from Mus musculus (Mouse).